We begin with the raw amino-acid sequence, 164 residues long: S-ribosylhomocysteine lyase (164 aa).

Histidine 54, histidine 58, and cysteine 128 together coordinate Fe cation.

This sequence belongs to the LuxS family. In terms of assembly, homodimer. It depends on Fe cation as a cofactor.

The enzyme catalyses S-(5-deoxy-D-ribos-5-yl)-L-homocysteine = (S)-4,5-dihydroxypentane-2,3-dione + L-homocysteine. In terms of biological role, involved in the synthesis of autoinducer 2 (AI-2) which is secreted by bacteria and is used to communicate both the cell density and the metabolic potential of the environment. The regulation of gene expression in response to changes in cell density is called quorum sensing. Catalyzes the transformation of S-ribosylhomocysteine (RHC) to homocysteine (HC) and 4,5-dihydroxy-2,3-pentadione (DPD). This Campylobacter jejuni subsp. doylei (strain ATCC BAA-1458 / RM4099 / 269.97) protein is S-ribosylhomocysteine lyase.